The primary structure comprises 525 residues: Bifunctional purine biosynthesis protein PurH (525 aa).

One can recognise an MGS-like domain in the interval 1 to 149 (MSDPVIKRAL…KNNESVTVVT (149 aa)).

It belongs to the PurH family.

The enzyme catalyses (6R)-10-formyltetrahydrofolate + 5-amino-1-(5-phospho-beta-D-ribosyl)imidazole-4-carboxamide = 5-formamido-1-(5-phospho-D-ribosyl)imidazole-4-carboxamide + (6S)-5,6,7,8-tetrahydrofolate. It carries out the reaction IMP + H2O = 5-formamido-1-(5-phospho-D-ribosyl)imidazole-4-carboxamide. Its pathway is purine metabolism; IMP biosynthesis via de novo pathway; 5-formamido-1-(5-phospho-D-ribosyl)imidazole-4-carboxamide from 5-amino-1-(5-phospho-D-ribosyl)imidazole-4-carboxamide (10-formyl THF route): step 1/1. It participates in purine metabolism; IMP biosynthesis via de novo pathway; IMP from 5-formamido-1-(5-phospho-D-ribosyl)imidazole-4-carboxamide: step 1/1. The polypeptide is Bifunctional purine biosynthesis protein PurH (Pelodictyon phaeoclathratiforme (strain DSM 5477 / BU-1)).